We begin with the raw amino-acid sequence, 199 residues long: Putative ATP-dependent Clp protease proteolytic subunit-like (199 aa).

The protein belongs to the peptidase S14 family. Component of the chloroplastic Clp protease core complex.

The protein resides in the plastid. The protein localises to the cyanelle. In terms of biological role, has lost the two conserved residues (Ser and His) proposed to be part of the active site. Therefore it could be inactive. The protein is Putative ATP-dependent Clp protease proteolytic subunit-like (clpP-B) of Cyanophora paradoxa.